A 34-amino-acid chain; its full sequence is Photosystem II reaction center protein M (34 aa).

The chain crosses the membrane as a helical span at residues 5 to 25; that stretch reads ILAFIATVLFILVPTAFLLII.

This sequence belongs to the PsbM family. As to quaternary structure, PSII is composed of 1 copy each of membrane proteins PsbA, PsbB, PsbC, PsbD, PsbE, PsbF, PsbH, PsbI, PsbJ, PsbK, PsbL, PsbM, PsbT, PsbX, PsbY, PsbZ, Psb30/Ycf12, at least 3 peripheral proteins of the oxygen-evolving complex and a large number of cofactors. It forms dimeric complexes.

It localises to the plastid. The protein localises to the chloroplast thylakoid membrane. In terms of biological role, one of the components of the core complex of photosystem II (PSII). PSII is a light-driven water:plastoquinone oxidoreductase that uses light energy to abstract electrons from H(2)O, generating O(2) and a proton gradient subsequently used for ATP formation. It consists of a core antenna complex that captures photons, and an electron transfer chain that converts photonic excitation into a charge separation. This subunit is found at the monomer-monomer interface. This is Photosystem II reaction center protein M from Piper cenocladum (Ant piper).